Reading from the N-terminus, the 410-residue chain is Peptidase T (410 aa).

A Zn(2+)-binding site is contributed by H79. Residue D81 is part of the active site. D142 contributes to the Zn(2+) binding site. Residue E176 is the Proton acceptor of the active site. Zn(2+)-binding residues include E177, D199, and H381.

It belongs to the peptidase M20B family. Zn(2+) is required as a cofactor.

It is found in the cytoplasm. It carries out the reaction Release of the N-terminal residue from a tripeptide.. Its function is as follows. Cleaves the N-terminal amino acid of tripeptides. This Bacillus cereus (strain B4264) protein is Peptidase T.